A 311-amino-acid polypeptide reads, in one-letter code: Acetaldehyde dehydrogenase (311 aa).

The active-site Acyl-thioester intermediate is the Cys131. NAD(+) is bound by residues 162–170 (SVGPGTRKN) and Asn273.

This sequence belongs to the acetaldehyde dehydrogenase family.

The enzyme catalyses acetaldehyde + NAD(+) + CoA = acetyl-CoA + NADH + H(+). The chain is Acetaldehyde dehydrogenase from Ralstonia pickettii (strain 12J).